The following is a 265-amino-acid chain: tRNA pseudouridine synthase A (265 aa).

Asp-58 (nucleophile) is an active-site residue. Tyr-116 is a substrate binding site.

It belongs to the tRNA pseudouridine synthase TruA family. As to quaternary structure, homodimer.

The enzyme catalyses uridine(38/39/40) in tRNA = pseudouridine(38/39/40) in tRNA. Its function is as follows. Formation of pseudouridine at positions 38, 39 and 40 in the anticodon stem and loop of transfer RNAs. This chain is tRNA pseudouridine synthase A, found in Neisseria meningitidis serogroup C (strain 053442).